The primary structure comprises 272 residues: Cytochrome c oxidase subunit 3 (272 aa).

Helical transmembrane passes span 23–43, 45–65, 91–111, 137–157, 169–189, 210–230, and 249–269; these read PWPFVASLCAFSCAIGGVMYM, AYVNGSFILSISFFCLLLVMF, FGVILFIISEILFFFAFFWAF, WEIPFLNTLILLLSGCTVTWC, SVLSLFLTIVLAIVFTTFQAY, ATGFHGFHVLVGTISLAVCLI, and AWYWHFVDVVWLFLFVSIYWW.

Belongs to the cytochrome c oxidase subunit 3 family. Component of the cytochrome c oxidase (complex IV, CIV), a multisubunit enzyme composed of a catalytic core of 3 subunits and several supernumerary subunits. The complex exists as a monomer or a dimer and forms supercomplexes (SCs) in the inner mitochondrial membrane with ubiquinol-cytochrome c oxidoreductase (cytochrome b-c1 complex, complex III, CIII).

The protein resides in the mitochondrion inner membrane. It carries out the reaction 4 Fe(II)-[cytochrome c] + O2 + 8 H(+)(in) = 4 Fe(III)-[cytochrome c] + 2 H2O + 4 H(+)(out). Component of the cytochrome c oxidase, the last enzyme in the mitochondrial electron transport chain which drives oxidative phosphorylation. The respiratory chain contains 3 multisubunit complexes succinate dehydrogenase (complex II, CII), ubiquinol-cytochrome c oxidoreductase (cytochrome b-c1 complex, complex III, CIII) and cytochrome c oxidase (complex IV, CIV), that cooperate to transfer electrons derived from NADH and succinate to molecular oxygen, creating an electrochemical gradient over the inner membrane that drives transmembrane transport and the ATP synthase. Cytochrome c oxidase is the component of the respiratory chain that catalyzes the reduction of oxygen to water. Electrons originating from reduced cytochrome c in the intermembrane space (IMS) are transferred via the dinuclear copper A center (CU(A)) of subunit 2 and heme A of subunit 1 to the active site in subunit 1, a binuclear center (BNC) formed by heme A3 and copper B (CU(B)). The BNC reduces molecular oxygen to 2 water molecules using 4 electrons from cytochrome c in the IMS and 4 protons from the mitochondrial matrix. The polypeptide is Cytochrome c oxidase subunit 3 (COX3) (Chondrus crispus (Carrageen Irish moss)).